The following is a 241-amino-acid chain: Ribonuclease P protein component 3 (241 aa).

The protein belongs to the eukaryotic/archaeal RNase P protein component 3 family. Consists of a catalytic RNA component and at least 4-5 protein subunits.

The protein localises to the cytoplasm. It catalyses the reaction Endonucleolytic cleavage of RNA, removing 5'-extranucleotides from tRNA precursor.. Functionally, part of ribonuclease P, a protein complex that generates mature tRNA molecules by cleaving their 5'-ends. The sequence is that of Ribonuclease P protein component 3 from Methanococcoides burtonii (strain DSM 6242 / NBRC 107633 / OCM 468 / ACE-M).